A 167-amino-acid chain; its full sequence is Phosphopantetheine adenylyltransferase (167 aa).

A substrate-binding site is contributed by serine 9. ATP contacts are provided by residues 9–10 (SF) and histidine 17. Substrate-binding residues include lysine 41, leucine 73, and lysine 87. ATP-binding positions include 88–90 (GLR), glutamate 98, and 123–129 (YSYLSSS).

It belongs to the bacterial CoaD family. In terms of assembly, homohexamer. The cofactor is Mg(2+).

Its subcellular location is the cytoplasm. The enzyme catalyses (R)-4'-phosphopantetheine + ATP + H(+) = 3'-dephospho-CoA + diphosphate. Its pathway is cofactor biosynthesis; coenzyme A biosynthesis; CoA from (R)-pantothenate: step 4/5. Its function is as follows. Reversibly transfers an adenylyl group from ATP to 4'-phosphopantetheine, yielding dephospho-CoA (dPCoA) and pyrophosphate. In Caldicellulosiruptor bescii (strain ATCC BAA-1888 / DSM 6725 / KCTC 15123 / Z-1320) (Anaerocellum thermophilum), this protein is Phosphopantetheine adenylyltransferase.